The primary structure comprises 225 residues: Putative membrane protease YugP (225 aa).

Zn(2+) is bound at residue histidine 95. Residue glutamate 96 is part of the active site. Residues histidine 99 and histidine 103 each contribute to the Zn(2+) site. The next 3 helical transmembrane spans lie at 116–138 (IFPVVNFASGVAPLLFLGGMLLG), 140–162 (LNLIGLGIILFSAAVFFQLITLP), and 192–212 (VLSAAALTYVAAALVSLFELL).

The protein resides in the cell membrane. The sequence is that of Putative membrane protease YugP (yugP) from Bacillus subtilis (strain 168).